The primary structure comprises 335 residues: Galactosylgalactosylxylosylprotein 3-beta-glucuronosyltransferase 3 (335 aa).

At 1 to 7 (MKLKLKN) the chain is on the cytoplasmic side. The chain crosses the membrane as a helical; Signal-anchor for type II membrane protein span at residues 8–28 (VFLAYFLVSIAGLLYALVQLG). The Lumenal portion of the chain corresponds to 29–335 (QPCDCLPPLR…GRGSDPAIEV (307 aa)). UDP-alpha-D-glucuronate is bound by residues 82 to 84 (PTY), Asp-113, Arg-156, Arg-161, and 194 to 196 (DDD). Position 196 (Asp-196) interacts with Mn(2+). An interaction with galactose moiety of substrate glycoprotein region spans residues 243 to 252 (WEPSRPFPVD). Residue Glu-281 is the Proton donor/acceptor of the active site. N-linked (GlcNAc...) asparagine glycosylation occurs at Asn-300. 308–310 (HTR) contacts UDP-alpha-D-glucuronate. Over residues 312 to 322 (EKPKMKQEEQL) the composition is skewed to basic and acidic residues. The tract at residues 312-335 (EKPKMKQEEQLQRQGRGSDPAIEV) is disordered.

The protein belongs to the glycosyltransferase 43 family. In terms of assembly, homodimer; disulfide-linked. Interacts with PXYLP1; the interaction increases the 2-phosphoxylose phosphatase activity of PXYLP1 during completion of linkage region formation in a B3GAT3-mediated manner. It depends on Mn(2+) as a cofactor. Post-translationally, N-glycosylated. As to expression, ubiquitous (but weakly expressed in all tissues examined).

Its subcellular location is the golgi apparatus membrane. The protein localises to the golgi apparatus. The protein resides in the cis-Golgi network. The enzyme catalyses 3-O-(beta-D-galactosyl-(1-&gt;3)-beta-D-galactosyl-(1-&gt;4)-beta-D-xylosyl)-L-seryl-[protein] + UDP-alpha-D-glucuronate = 3-O-(beta-D-GlcA-(1-&gt;3)-beta-D-Gal-(1-&gt;3)-beta-D-Gal-(1-&gt;4)-beta-D-Xyl)-L-seryl-[protein] + UDP + H(+). The protein operates within protein modification; protein glycosylation. With respect to regulation, inhibited by EDTA. In terms of biological role, glycosaminoglycans biosynthesis. Involved in forming the linkage tetrasaccharide present in heparan sulfate and chondroitin sulfate. Transfers a glucuronic acid moiety from the uridine diphosphate-glucuronic acid (UDP-GlcUA) to the common linkage region trisaccharide Gal-beta-1,3-Gal-beta-1,4-Xyl covalently bound to a Ser residue at the glycosaminylglycan attachment site of proteoglycans. Can also play a role in the biosynthesis of l2/HNK-1 carbohydrate epitope on glycoproteins. Shows strict specificity for Gal-beta-1,3-Gal-beta-1,4-Xyl, exhibiting negligible incorporation into other galactoside substrates including Galbeta1-3Gal beta1-O-benzyl, Galbeta1-4GlcNAc and Galbeta1-4Glc. Stimulates 2-phosphoxylose phosphatase activity of PXYLP1 in presence of uridine diphosphate-glucuronic acid (UDP-GlcUA) during completion of linkage region formation. In Homo sapiens (Human), this protein is Galactosylgalactosylxylosylprotein 3-beta-glucuronosyltransferase 3 (B3GAT3).